Reading from the N-terminus, the 29-residue chain is U20-ctenitoxin-Co1a (29 aa).

Cystine bridges form between Cys3/Cys16 and Cys10/Cys21.

In terms of tissue distribution, expressed by the venom gland.

Its subcellular location is the secreted. This chain is U20-ctenitoxin-Co1a, found in Ctenus ornatus (Brazilian spider).